The following is a 1481-amino-acid chain: MLFSACADTNDQSLGPNVLGCRGDFDFTVKFEQLCFSLTPAAIFILASPWRVAHLVRKPTIVGAPLLRLAKLGVLVSYASLELSQLILITVLPFGASGIDIISSALRLAAALCMVGLSYFDHSKSPRPSIFLSAYLFFTLLFDIAQARTYWLASSTRPEIAFTAIFTAALAMKIAMLLLEAQRKTKWVAWDSKDHSPEETSGIYTLGVFSWLNKLFFDGYHKTLGIRDLYPLDQNLAATHLSERFSRHINEAKRKGHEIGLMEALAKTLYVPMILPIPAKLAAIGSFFCQPLFISSLTSRLSQSEPVPANIGYGFIGASICIYSVIAISQSLYWYFQQRLLYMMRACLATAIYTKTTEARAADEDENASLTLMSIDIERIMKGSLYMHELWGNVIEVALSAWLLYNLLGVAFIAPIVVVCICVGGVSFFMRFMGDSQRNWMAGIQKRVGLTSSVIGNMKNIKISGLTSPISRFVEKLRVDELQAGSNFRLLMLTCSVFAYIPLLLSPPITFGVARRSLDATKLFTSLSYLLLMSTPLQNLLETLPQMAAAVACLGRIQKFLQGEGRDDYRIFLAGSRRDPEKPSLDQLDKSPAVAIKDGSFGWKPDKMVLNNLDVEIPRGSLTIVVGPIASGKSSLCKALLGEMPHSQGTVTIATKFSCVGYCDQTPFLSNGSIRDNIIGYSPFDAQRYAEVVDGTMLGIDFETLPEADRTNIGSNGITLSGGQKQRVSLARCLYLQSDLLIMDDVFSGLDADTEDQVFQRVFGANGILKRRQATVVLCTHSVRHIPSATHVIALSTDGTVVEQGTFGDLVANQSYIHSLGVKAPSTSQADSEKIESDDSAIEPQINLIERAPTETPEVGVNDKSRLSGDSAAYIVYMKSMGTMLPIAIFTSGLLYGFFYNFPTIWLTYWSADAVATNPSHSFGYYAAIYAVLEVCAMLSLIWLGVLLYITVLTRSGVSLHHAALRTLIHAPLRFFTTTDQGIITNLFSQDLSLIDNELPSALLNVIYMVFVGIGQAAVIASSSPYLAISYPFLFGMLYVVQKFYLRTSRQLRLLDLEAKSPLYTHFLDTSKGIVTLRAFGFVSEDRAKNAFLLDTSQRPAYLLAMIQQWLHFVLNVVVAIIAVMLTSLAVRLRSNSGFTGASLVTLMSFGEMLSGVVIYYTALETSLGAISRLKAFDKAAKTETKDGEDIVPPEEWPPRGEIILNNVSASYEYELPLFLSIRLTTNELSSNDTQPETPTLALKNLRLRIRPGEKIAICGRTGSGKSSLISLLLKLLDPIDETLDCVNIDNTPLSRIDRVTLRQRIIAIPQDIVFLPDGSTFQENLDPSNVSTAADAQAVLEAVDLWDFVRDKGGLEAGMTVSNLSQGQRQLFSLGRAVLRRRIRARSLGLGGGGSEGGILLLDEVSSSVDRETEKAMQEVIRVEFREYTVVAVSHRLDIIMDYDRVVVMEKGEIVEEGNPARLVEEPGTRFGELWSVGGN.

6 helical membrane-spanning segments follow: residues 27–47 (FTVK…FILA), 86–106 (LILI…SSAL), 130–150 (IFLS…ARTY), 159–179 (EIAF…MLLL), 269–289 (LYVP…SFFC), and 308–328 (PANI…VIAI). The region spanning 281–549 (LAAIGSFFCQ…LLETLPQMAA (269 aa)) is the ABC transmembrane type-1 1 domain. N-linked (GlcNAc...) asparagine glycosylation is present at Asn367. A run of 3 helical transmembrane segments spans residues 389-409 (ELWG…NLLG), 410-430 (VAFI…SFFM), and 491-511 (LMLT…PITF). The 230-residue stretch at 594-823 (VAIKDGSFGW…QSYIHSLGVK (230 aa)) folds into the ABC transporter 1 domain. Residue 627–634 (GPIASGKS) participates in ATP binding. N-linked (GlcNAc...) asparagine glycans are attached at residues Asn671 and Asn813. Helical transmembrane passes span 887-907 (IAIF…TIWL), 928-948 (AIYA…GVLL), 1001-1021 (SALL…AVIA), 1026-1046 (YLAI…KFYL), 1111-1131 (LHFV…SLAV), and 1144-1164 (LVTL…YTAL). An ABC transmembrane type-1 2 domain is found at 887 to 1166 (IAIFTSGLLY…VVIYYTALET (280 aa)). Asn1207 and Asn1232 each carry an N-linked (GlcNAc...) asparagine glycan. Positions 1224–1477 (LTTNELSSND…PGTRFGELWS (254 aa)) constitute an ABC transporter 2 domain. Residue 1260-1267 (GRTGSGKS) coordinates ATP. N-linked (GlcNAc...) asparagine glycosylation is found at Asn1330 and Asn1364.

Belongs to the ABC transporter superfamily. ABCC family. Conjugate transporter (TC 3.A.1.208) subfamily.

The protein resides in the membrane. Functionally, ABC-type transporter; part of the gene cluster that mediates the biosynthesis of the brasilane terpene glycosides brasilane D and E. The protein is ABC-type transporter braE of Annulohypoxylon truncatum (Hypoxylon truncatum).